Consider the following 351-residue polypeptide: Transmembrane protein 255A (351 aa).

Transmembrane regions (helical) follow at residues 30–50, 57–77, 89–109, and 226–246; these read IYVTVTLLIVSVLILTVGLAA, VTVGGYYPGVILGFGSFLGII, LVASIVFISFGVIAAFCCAIV, and TILNIVGLFLGIITAAVLGGF. Residues 302 to 331 form a disordered region; that stretch reads FPSSPPSGLSDEQEPQSPSPSPSYMWSSSA.

The protein belongs to the TMEM255 family.

The protein localises to the membrane. This chain is Transmembrane protein 255A (Tmem255a), found in Rattus norvegicus (Rat).